The following is a 146-amino-acid chain: Hemoglobin subunit beta (146 aa).

The Globin domain occupies 2–146 (HWSAEEKQLI…VAHALARKYH (145 aa)). 2 residues coordinate heme b: His-63 and His-92.

It belongs to the globin family. In terms of assembly, heterotetramer of two alpha chains and two beta chains. As to expression, red blood cells.

Involved in oxygen transport from the lung to the various peripheral tissues. The chain is Hemoglobin subunit beta (HBB) from Anser indicus (Bar-headed goose).